Consider the following 60-residue polypeptide: UPF0434 protein NMC0623 (60 aa).

It belongs to the UPF0434 family.

The polypeptide is UPF0434 protein NMC0623 (Neisseria meningitidis serogroup C / serotype 2a (strain ATCC 700532 / DSM 15464 / FAM18)).